A 353-amino-acid polypeptide reads, in one-letter code: UPF0283 membrane protein YcjF (353 aa).

The next 3 membrane-spanning stretches (helical) occupy residues 70-90 (MVMGGLALFGASVVGQGVQWT), 100-120 (VALGGCAAGALIIGAGVGSVV), and 213-233 (ESTLMIAVSPLALVDMAFIAW).

It belongs to the UPF0283 family.

It is found in the cell inner membrane. The protein is UPF0283 membrane protein YcjF of Escherichia coli O139:H28 (strain E24377A / ETEC).